Here is a 282-residue protein sequence, read N- to C-terminus: Aldo-keto reductase MUL_1987 (282 aa).

Tyr-57 (proton donor) is an active-site residue. Positions 197, 235, 238, 246, 247, and 273 each coordinate NADPH.

Belongs to the aldo/keto reductase family.

This Mycobacterium ulcerans (strain Agy99) protein is Aldo-keto reductase MUL_1987.